The sequence spans 992 residues: UPF0182 protein RHA1_ro06389 (992 aa).

Helical transmembrane passes span 18 to 38 (VLLV…RLIS), 63 to 83 (LLLF…ALLL), 114 to 134 (LFGL…AQSS), 174 to 194 (WLFV…YIFG), 211 to 231 (VQLA…YWFD), 260 to 280 (KLIL…AIFL), and 288 to 308 (MATA…PLVV). Residues 904–948 (TGSVATAPSAEEGTPPETGTTPPVDQGAAPAPTAPATPPSGTDVS) form a disordered region. The span at 908 to 934 (ATAPSAEEGTPPETGTTPPVDQGAAPA) shows a compositional bias: low complexity.

Belongs to the UPF0182 family.

The protein localises to the cell membrane. The sequence is that of UPF0182 protein RHA1_ro06389 from Rhodococcus jostii (strain RHA1).